The primary structure comprises 302 residues: Glutaminase (302 aa).

Substrate is bound by residues serine 61, asparagine 111, glutamate 155, asparagine 162, tyrosine 186, tyrosine 238, and valine 256.

It belongs to the glutaminase family. In terms of assembly, homotetramer.

It catalyses the reaction L-glutamine + H2O = L-glutamate + NH4(+). The polypeptide is Glutaminase (Pseudomonas syringae pv. tomato (strain ATCC BAA-871 / DC3000)).